The sequence spans 2038 residues: Homeotic protein female sterile (2038 aa).

The Bromo 1 domain occupies 34–140 (RNTNQLQYLI…KVFLQKIESM (107 aa)). Residues 145 to 284 (LELEPVTAKG…TTAMAGGVGG (140 aa)) are disordered. 2 stretches are compositionally biased toward low complexity: residues 177–209 (GSGT…SGLQ) and 268–279 (PGSTNTTTTAMA). A helical membrane pass occupies residues 330–350 (AAVAAAAAAAAAAAAAAGGAA). Residues 396 to 432 (KGVKRKADTTTPTANAFESPYTQMDSKSAKIATRRES) form a disordered region. Polar residues predominate over residues 404–421 (TTTPTANAFESPYTQMDS). Residues 451–471 (VSGVPGLGGLVAGGVAGVAVA) traverse the membrane as a helical segment. At serine 452 the chain carries Phosphoserine. One can recognise a Bromo 2 domain in the interval 475 to 584 (EKLSDALKSC…DVFEMRYANI (110 aa)). Disordered regions lie at residues 590–655 (ANAA…ERSA) and 677–735 (EASA…SVPG). Residues 593 to 619 (AHHHGHGHGHGHGHGHGHGHGHGHGHG) are compositionally biased toward basic residues. Over residues 636 to 649 (SSEDSSDTENESNS) the composition is skewed to acidic residues. Residues 681 to 694 (KKKAKKKLKEKKKS) are compositionally biased toward basic residues. Residues 711-735 (TGGGANAGGAGGPGSGGHGSVSVPG) show a composition bias toward gly residues. The next 3 helical transmembrane spans lie at 750 to 770 (LNAL…AGGV), 790 to 810 (MAGG…AAGA), and 816 to 830 (AGTL…AAAG). 10 disordered regions span residues 832 to 858 (GGTT…SGAG), 891 to 956 (AGAA…SYDE), 1016 to 1139 (CLRK…GGNL), 1217 to 1260 (AVSA…ATVA), 1384 to 1416 (QPAG…QQQQ), 1502 to 1530 (MQQM…QQQH), 1580 to 1616 (IESM…PNAA), 1645 to 1728 (WSSL…VAQA), 1745 to 1918 (AAAA…SGAI), and 1957 to 2023 (MESG…GQID). A helical membrane pass occupies residues 874-894 (GAAGAAAGAGSVGGVGGAGAA). Residues 910 to 927 (GAGGGVGGANASAGGAGA) are compositionally biased toward gly residues. One can recognise an NET domain in the interval 942–1024 (DSEEEDTAKP…SCLRKKTHKK (83 aa)). Phosphoserine is present on serine 943. Basic residues predominate over residues 1017-1027 (LRKKTHKKPSG). A compositionally biased stretch (basic and acidic residues) spans 1028 to 1046 (KSKDEQMAEKKQELEKRLQ). Over residues 1079–1100 (SSSSSSSDSSSSSSSDSSSSDS) the composition is skewed to low complexity. Polar residues-rich tracts occupy residues 1121-1131 (SNGSNVNNPSI) and 1222-1232 (TGQQHNKNGPN). The span at 1645–1665 (WSSLASANSPQSHTSSSSSSS) shows a compositional bias: low complexity. Serine 1653 carries the post-translational modification Phosphoserine. Residues 1680 to 1708 (KAKERDRLKLLEAAEKEKKNQKEAAEKEQ) are compositionally biased toward basic and acidic residues. Composition is skewed to low complexity over residues 1716–1728 (SSSS…VAQA) and 1745–1760 (AAAA…PSGG). Residues 1731–1751 (IAAATAAAAVTLGAAAAAALA) traverse the membrane as a helical segment. The segment covering 1776 to 1791 (GDRDRDRDRERERERS) has biased composition (basic and acidic residues). The segment covering 1800–1813 (NGNNSSNSANSNGP) has biased composition (low complexity). Gly residues-rich tracts occupy residues 1814–1828 (GSAG…GGSG) and 1835–1856 (PNSG…GGGP). Over residues 1857–1884 (ALLNAGSNSNSGVGSGGAASSNSNSSVG) the composition is skewed to low complexity. Over residues 1885 to 1915 (GIVGSGGPGSNSQGSSGGGGGGPASGGGMGS) the composition is skewed to gly residues. The chain crosses the membrane as a helical span at residues 1939–1959 (VAAAVAAQAILAASPLGAMES). Phosphoserine occurs at positions 1980 and 1988. Positions 1986–1997 (QSSPAQQSPQDR) are enriched in low complexity. Positions 1998–2017 (AAAKRAEQRRAEQERRRREA) are enriched in basic and acidic residues.

Its subcellular location is the membrane. Functionally, required maternally for proper expression of other homeotic genes involved in pattern formation, such as Ubx. This chain is Homeotic protein female sterile (fs(1)h), found in Drosophila melanogaster (Fruit fly).